A 229-amino-acid chain; its full sequence is CRISPR pre-crRNA endoribonuclease Cas5d (229 aa).

This sequence belongs to the CRISPR-associated protein Cas5 family. Subtype I-C/Dvulg subfamily. Does not require a metal cofactor. serves as cofactor.

Its function is as follows. CRISPR (clustered regularly interspaced short palindromic repeat) is an adaptive immune system that provides protection against mobile genetic elements (viruses, transposable elements and conjugative plasmids). CRISPR clusters contain spacers, sequences complementary to antecedent mobile elements, and target invading nucleic acids. CRISPR clusters are transcribed and processed into CRISPR RNA (crRNA). This protein is a sequence-specific endonuclease that cleaves pre-crRNA into mature crRNA, possibly by an intramolecular attack of the 2'-hydroxyl group of G26 on the scissile phosphodiester, cutting the precursor 3' to G26 residue yielding 5'-hydroxyl and 2' and/or 3' ends lacking a hydroxyl group (perhaps a 2'/3' cyclic phosphodiester). Requires between 4 and 8 nt downstream of the cleavage site for both binding and cleavage of pre-crRNA. Substitution with dG at this position abolishes cleavage but not RNA binding. Does not cleave pre-crRNA associated with the M.succiniciproducens strain MBEL55E Cas5 protein (AC Q65TW5) CRISPR locus. This Thermus thermophilus (strain ATCC BAA-163 / DSM 7039 / HB27) protein is CRISPR pre-crRNA endoribonuclease Cas5d.